The chain runs to 957 residues: Glutamyl aminopeptidase (957 aa).

Over 1–18 (MNFAEREGSKRYCIQTKH) the chain is Cytoplasmic. A helical; Signal-anchor for type II membrane protein membrane pass occupies residues 19-39 (VAILCAVVVGVGLIVGLAVGL). The Extracellular portion of the chain corresponds to 40-957 (TRSCDSSGDG…EWFFNLLESG (918 aa)). The disordered stretch occupies residues 44 to 83 (DSSGDGGPGTAPAPSHLPSSTASPSGPPAQDQDICPASED). Asn-98 carries an N-linked (GlcNAc...) asparagine; atypical glycan. Asn-124 and Asn-197 each carry an N-linked (GlcNAc...) asparagine glycan. Glu-223 provides a ligand contact to substrate. N-linked (GlcNAc...) asparagine glycosylation is found at Asn-324 and Asn-340. Position 357 to 361 (357 to 361 (GAMEN)) interacts with substrate. A Zn(2+)-binding site is contributed by His-393. Glu-394 functions as the Proton acceptor in the catalytic mechanism. The Zn(2+) site is built by His-397 and Glu-416. Residues Asn-554, Asn-589, Asn-597, Asn-607, Asn-678, Asn-763, Asn-773, Asn-801, and Asn-828 are each glycosylated (N-linked (GlcNAc...) asparagine). Position 887 (Arg-887) interacts with substrate.

Belongs to the peptidase M1 family. In terms of assembly, homodimer; disulfide-linked. Zn(2+) is required as a cofactor. Expressed in choriocarcinoma cancer cell lines (at protein level). Expressed by epithelial cells of the proximal tubule cells and the glomerulus of the nephron. Also found in a variety of other tissues.

It localises to the cell membrane. It catalyses the reaction Release of N-terminal glutamate (and to a lesser extent aspartate) from a peptide.. Its activity is regulated as follows. Substrate specificity is modulated by calcium which enhances the enzymatic activity for cleavage of acidic residues while reducing its activity with basic residues. Inhibited by aminopeptidase inhibitors amastatin and bestatin. Regulates central hypertension through its calcium-modulated preference to cleave N-terminal acidic residues from peptides such as angiotensin II. This chain is Glutamyl aminopeptidase (ENPEP), found in Homo sapiens (Human).